Reading from the N-terminus, the 101-residue chain is Pro-corazonin (101 aa).

An N-terminal signal peptide occupies residues 1-19 (MVTNITLILTLMTLASVTA). Residue Q20 is modified to Pyrrolidone carboxylic acid. Asparagine amide is present on N30.

The protein belongs to the corazonin family.

The protein resides in the secreted. Cardioactive peptide. Corazonin is probably involved in the physiological regulation of the heart beat. This chain is Pro-corazonin (crz), found in Bombyx mori (Silk moth).